Consider the following 391-residue polypeptide: Response regulator aspartate phosphatase I (391 aa).

TPR repeat units follow at residues 62–95 (LEFR…EKQG), 150–183 (SYVY…AVQT), 184–217 (VRCQ…SKES), 224–257 (AMSH…FEKS), 275–311 (KQQN…LEGL), and 338–371 (ENFS…RRKI).

The protein belongs to the Rap family.

Its subcellular location is the cytoplasm. With respect to regulation, inhibited by PhrI. Activates ICEBs1 gene expression, excision and transfer by inactivating the ICEBs1 repressor protein ImmR. RapI-mediated induction likely results from an increase in the specific activity of the protease ImmA, which mediates proteolysis of ImmR. In addition, is involved in regulation of sporulation. Acts as a phosphatase that specifically dephosphorylates the sporulation initiation phosphotransferase Spo0F and inhibits its activity. The polypeptide is Response regulator aspartate phosphatase I (rapI) (Bacillus subtilis (strain 168)).